The following is a 205-amino-acid chain: Small ribosomal subunit protein uS4c (205 aa).

The region spanning 93–156 (MRLDNTVFRL…KSRNLVLNNL (64 aa)) is the S4 RNA-binding domain.

It belongs to the universal ribosomal protein uS4 family. As to quaternary structure, part of the 30S ribosomal subunit. Contacts protein S5. The interaction surface between S4 and S5 is involved in control of translational fidelity.

It is found in the plastid. The protein localises to the chloroplast. Functionally, one of the primary rRNA binding proteins, it binds directly to 16S rRNA where it nucleates assembly of the body of the 30S subunit. Its function is as follows. With S5 and S12 plays an important role in translational accuracy. The protein is Small ribosomal subunit protein uS4c (rps4) of Mesostigma viride (Green alga).